We begin with the raw amino-acid sequence, 316 residues long: N-acetylmuramic acid 6-phosphate etherase (316 aa).

The interval 1–25 (MAVFDPDLQPSSDRGHLLTEQSNQR) is disordered. The SIS domain occupies 66–229 (VANRLRAGGR…STAVMVKLGK (164 aa)). Catalysis depends on Glu-94, which acts as the Proton donor. Glu-125 is an active-site residue.

It belongs to the GCKR-like family. MurNAc-6-P etherase subfamily. In terms of assembly, homodimer.

The catalysed reaction is N-acetyl-D-muramate 6-phosphate + H2O = N-acetyl-D-glucosamine 6-phosphate + (R)-lactate. It functions in the pathway amino-sugar metabolism; N-acetylmuramate degradation. Its function is as follows. Specifically catalyzes the cleavage of the D-lactyl ether substituent of MurNAc 6-phosphate, producing GlcNAc 6-phosphate and D-lactate. The sequence is that of N-acetylmuramic acid 6-phosphate etherase from Synechococcus sp. (strain CC9605).